The following is a 176-amino-acid chain: HTH-type transcriptional regulator DctR (176 aa).

The HTH luxR-type domain occupies 109 to 174 (VPEANVSLSR…ELVRHQHIDY (66 aa)). Residues 133–152 (TEDILEKLKISLKTFYCHKH) constitute a DNA-binding region (H-T-H motif).

In terms of biological role, may act as a transcriptional regulator of dctA. This is HTH-type transcriptional regulator DctR (dctR) from Shigella flexneri.